The primary structure comprises 124 residues: Cytochrome c2 (124 aa).

Q1 carries the pyrrolidone carboxylic acid modification. Heme c-binding residues include C15, C18, H19, and M100.

Binds 1 heme c group covalently per subunit.

The protein resides in the periplasm. Functionally, cytochrome c2 is found mainly in purple, non-sulfur, photosynthetic bacteria where it functions as the electron donor to the oxidized bacteriochlorophyll in the photophosphorylation pathway. However, it may also have a role in the respiratory chain and is found in some non-photosynthetic bacteria. This chain is Cytochrome c2 (cycA), found in Cereibacter sphaeroides (Rhodobacter sphaeroides).